Here is a 137-residue protein sequence, read N- to C-terminus: Ribosome-binding factor A (137 aa).

It belongs to the RbfA family. In terms of assembly, monomer. Binds 30S ribosomal subunits, but not 50S ribosomal subunits or 70S ribosomes.

It is found in the cytoplasm. In terms of biological role, one of several proteins that assist in the late maturation steps of the functional core of the 30S ribosomal subunit. Associates with free 30S ribosomal subunits (but not with 30S subunits that are part of 70S ribosomes or polysomes). Required for efficient processing of 16S rRNA. May interact with the 5'-terminal helix region of 16S rRNA. The polypeptide is Ribosome-binding factor A (Trichodesmium erythraeum (strain IMS101)).